The chain runs to 179 residues: MASFLSPVPVLAAGGIADINPGLTLWTAITFLVMLVVLGKFAWGPIVKMLAERERSIREAIDSAKKERAEAERLLAAQKESLAKAQREAAELARRNQQEVEALRQELTAKARKEADELVAEARRQIAEELGKAKTELKAQVVDLAIDAASRLVKANLDEKAQRALVEEYIAQLPANRAA.

The chain crosses the membrane as a helical span at residues 27–47 (TAITFLVMLVVLGKFAWGPIV).

Belongs to the ATPase B chain family. F-type ATPases have 2 components, F(1) - the catalytic core - and F(0) - the membrane proton channel. F(1) has five subunits: alpha(3), beta(3), gamma(1), delta(1), epsilon(1). F(0) has three main subunits: a(1), b(2) and c(10-14). The alpha and beta chains form an alternating ring which encloses part of the gamma chain. F(1) is attached to F(0) by a central stalk formed by the gamma and epsilon chains, while a peripheral stalk is formed by the delta and b chains.

The protein resides in the cell inner membrane. Functionally, f(1)F(0) ATP synthase produces ATP from ADP in the presence of a proton or sodium gradient. F-type ATPases consist of two structural domains, F(1) containing the extramembraneous catalytic core and F(0) containing the membrane proton channel, linked together by a central stalk and a peripheral stalk. During catalysis, ATP synthesis in the catalytic domain of F(1) is coupled via a rotary mechanism of the central stalk subunits to proton translocation. Component of the F(0) channel, it forms part of the peripheral stalk, linking F(1) to F(0). The chain is ATP synthase subunit b from Anaeromyxobacter sp. (strain K).